The sequence spans 617 residues: MSKCATPTPSTSSNSSDEAKRSPQPMSRGFPQRNMSTTSSNGSNSPRHRSLETPIVLQPATRFALANLTTTVLRLDFWDDNDPNSIFFCKSTFNIVTQCLDLPEKVIKTVKTHLEGEEDLTDIAPMIMSVREDPVYKTEGSTPFLASLLVAFVNQGNYDSRYRVFLRHLTTLLGVVWTEFEDVEDSLASTLLEEQFVESEHSRTVREKTARNKKIKRYLMIGAAGGVGGVLIGLTGGLAAPLVAASAGMLIGGGAVAGLATTAGAAVLGTTMGVAGAGFTGYKMKKRVGAIEEFSVETLSEGVSLSCSLVVSGWIESDTSPDQAFVHQWRHLRHTKEQYTLRYESNYLMELGNAIEYLMSFAVSVAIQQTLLETALAGLVSAVAWPVALMSVSSVLDNPWNVCVSRAAEVGEQLAEVLLSRSHGKRPITLIGFSLGARVIFHCLLTMSKRSESVGIIEDVILLGAPVTASPKEWSKVCTVVSGRVINGYCETDWLLRFLYRTMSAQFRIAGTGPIDNRNSKKIYNYNLSHIVKGHMDYSKRLTEVLNAVGVKVGPHSEDSVVDLTQLEGPHEATGQAEEAINYQSTGEEEEHPIVHPINLENIHEVKVLDSPHKNEF.

Composition is skewed to low complexity over residues 1-16 (MSKC…SNSS) and 36-45 (STTSSNGSNS). The tract at residues 1–49 (MSKCATPTPSTSSNSSDEAKRSPQPMSRGFPQRNMSTTSSNGSNSPRHR) is disordered. 3 helical membrane-spanning segments follow: residues 219–239 (LMIG…GGLA), 262–282 (TAGA…FTGY), and 427–447 (PITL…LLTM).

It belongs to the TMCO4 family.

It is found in the membrane. This is an uncharacterized protein from Caenorhabditis elegans.